Reading from the N-terminus, the 372-residue chain is UDP-N-acetylglucosamine--N-acetylmuramyl-(pentapeptide) pyrophosphoryl-undecaprenol N-acetylglucosamine transferase (372 aa).

UDP-N-acetyl-alpha-D-glucosamine contacts are provided by residues 10–12 (TGG), N124, R166, S196, I256, and Q301.

This sequence belongs to the glycosyltransferase 28 family. MurG subfamily.

The protein resides in the cell membrane. It carries out the reaction di-trans,octa-cis-undecaprenyl diphospho-N-acetyl-alpha-D-muramoyl-L-alanyl-D-glutamyl-meso-2,6-diaminopimeloyl-D-alanyl-D-alanine + UDP-N-acetyl-alpha-D-glucosamine = di-trans,octa-cis-undecaprenyl diphospho-[N-acetyl-alpha-D-glucosaminyl-(1-&gt;4)]-N-acetyl-alpha-D-muramoyl-L-alanyl-D-glutamyl-meso-2,6-diaminopimeloyl-D-alanyl-D-alanine + UDP + H(+). Its pathway is cell wall biogenesis; peptidoglycan biosynthesis. Cell wall formation. Catalyzes the transfer of a GlcNAc subunit on undecaprenyl-pyrophosphoryl-MurNAc-pentapeptide (lipid intermediate I) to form undecaprenyl-pyrophosphoryl-MurNAc-(pentapeptide)GlcNAc (lipid intermediate II). The sequence is that of UDP-N-acetylglucosamine--N-acetylmuramyl-(pentapeptide) pyrophosphoryl-undecaprenol N-acetylglucosamine transferase from Desulforamulus reducens (strain ATCC BAA-1160 / DSM 100696 / MI-1) (Desulfotomaculum reducens).